The following is an 829-amino-acid chain: Cap-specific mRNA (nucleoside-2'-O-)-methyltransferase 1 (829 aa).

The interval 1–68 is disordered; sequence MKRAAQASDE…DSQNSQGSMA (68 aa). The Bipartite nuclear localization signal motif lies at 2-16; it reads KRAAQASDEPLKKRK. Over residues 31-44 the composition is skewed to low complexity; sequence QRTTSQDSSQSESL. Polar residues predominate over residues 55 to 68; the sequence is SRPSDSQNSQGSMA. The 47-residue stretch at 79-125 folds into the G-patch domain; that stretch reads YNNVSQKLMAKMGFREGEGLGKYGQGRKEIVEASTQRGRRGLGLMLK. Substrate-binding positions include 195–199 and Arg-210; that span reads KTVFD. The RrmJ-type SAM-dependent 2'-O-MTase domain maps to 223-442; sequence FFLNRAAMKM…ERYVVCKGLK (220 aa). Position 226 (Asn-226) interacts with S-adenosyl-L-methionine. Residue Lys-231 is part of the active site. S-adenosyl-L-methionine contacts are provided by residues 269–275 and 327–328; these read CAGPGGF and DI. The active site involves Asp-356. 366–368 serves as a coordination point for substrate; sequence NLQ. The active-site Proton acceptor is the Lys-396. Asn-431 is a substrate binding site. Residues 745–779 form the WW domain; sequence KTVNDPWTMAFSKSSKRKFFYNKQTKESTYDLPAT.

The protein localises to the nucleus. It catalyses the reaction a 5'-end (N(7)-methyl 5'-triphosphoguanosine)-ribonucleoside in mRNA + S-adenosyl-L-methionine = a 5'-end (N(7)-methyl 5'-triphosphoguanosine)-(2'-O-methyl-ribonucleoside) in mRNA + S-adenosyl-L-homocysteine + H(+). Its function is as follows. S-adenosyl-L-methionine-dependent methyltransferase that mediates mRNA cap1 2'-O-ribose methylation to the 5'-cap structure of mRNAs. Methylates the ribose of the first nucleotide of a m(7)GpppG-capped mRNA and small nuclear RNA (snRNA) to produce m(7)GpppRm (cap1). Displays a preference for cap0 transcripts. Cap1 modification is linked to higher levels of translation. May be involved in the interferon response pathway. The polypeptide is Cap-specific mRNA (nucleoside-2'-O-)-methyltransferase 1 (cmtr1) (Danio rerio (Zebrafish)).